The following is a 959-amino-acid chain: MLIRHNRSSIAKPILLFLGCLVIGQLGVLVVANSLWFTEMGYLNTFLKQLSWQLGLGWGSAILSLLFIFTNLRLAQRFRWQKAKEDSYPLSPQSPSINLLGLLIIATGIGAWIGSMLLYYSKLALSLWTPDFNLPNLSSSLSSPLEIVWIRQVLTDISSNLWQGLIIAFLVLGLLIKTEYFLRIISIVFTVMLSFIIAGQWANFLKYFYGVPFNINDPQYGNDLGFYIFQLPLWQLLELWLTGVGIYTLFAVILTYLFSADSLSLGTFPGFSRPQLRHLYALWSGLMGLLVLHHIIQRYLLLYSPEGVVYGAGYIDVHVGQFIEIILGIIAGITSIWLGEKALFGKKDRRKLYKNTKKKLVFFPYLVPVFLYLIVWISGTIISGLLQRTVVQPNELVRERPYIERSIQSTRAAFSLDRIDAQVFDPQAELNAEVLERNHLTIDNIRLWDTKPLLETNRQLQQIRLYYKFPDADIDRYRVRVGLPEKIEERQISEKQQTIIAARELDYSAVPTSANTWVNKHLVYTHGYGFTLSPVNLVAAGGLPYYFVKDIGTNKDEGALQTSSELIDYSIPIGKPRIYYGELTNNYVMTPTTVEELDFPSGDGNVYNTYDGKGGILVGTGWRRWLFALYLRDWQMLFSQDFTPETRLLMRRDIQNRVQTIAPFLNYDRNPYLVAADVGDSSSKLHWIIDAYTISNRYPYSDPGKDKFNYIRNSVKVVVDAYHGTVNFYVADENDPIIQTWSKIFPHLFKSLAEMPKTLRSHIRYPEDLFSTQAERLLTYHMTDPQVFYNREDQWEIPLEIYGTEPQAVSPYYLIMKLPDSDKEEFILLHPYTPSSRQNLIAWLAARSDDREYGKLLLYQFPKQRLVYGPNQIEALINQDPDISQQISLWNRDGSKVLQGHLLIIPIEQSLLYVEPLYLVADQNSVPTIARVTVAYQNKIVMEPTLKEALEKLFSGDQS.

Helical transmembrane passes span 13–33 (PILL…VVAN), 50–70 (LSWQ…FIFT), 99–119 (LLGL…MLLY), 156–176 (DISS…GLLI), 184–204 (IISI…WANF), 239–259 (LWLT…YLFS), 276–296 (LRHL…HHII), 319–339 (VGQF…IWLG), and 362–382 (FFPY…GTII).

This sequence belongs to the UPF0182 family.

It localises to the cell membrane. This Microcystis aeruginosa (strain NIES-843 / IAM M-2473) protein is UPF0182 protein MAE_41360.